The primary structure comprises 421 residues: 4-hydroxy-3-methylbut-2-en-1-yl diphosphate synthase (flavodoxin) (421 aa).

[4Fe-4S] cluster contacts are provided by Cys311, Cys314, Cys357, and Glu364.

The protein belongs to the IspG family. Requires [4Fe-4S] cluster as cofactor.

It catalyses the reaction (2E)-4-hydroxy-3-methylbut-2-enyl diphosphate + oxidized [flavodoxin] + H2O + 2 H(+) = 2-C-methyl-D-erythritol 2,4-cyclic diphosphate + reduced [flavodoxin]. The protein operates within isoprenoid biosynthesis; isopentenyl diphosphate biosynthesis via DXP pathway; isopentenyl diphosphate from 1-deoxy-D-xylulose 5-phosphate: step 5/6. In terms of biological role, converts 2C-methyl-D-erythritol 2,4-cyclodiphosphate (ME-2,4cPP) into 1-hydroxy-2-methyl-2-(E)-butenyl 4-diphosphate. The chain is 4-hydroxy-3-methylbut-2-en-1-yl diphosphate synthase (flavodoxin) from Xanthomonas oryzae pv. oryzae (strain KACC10331 / KXO85).